The primary structure comprises 113 residues: Cell division protein FtsB (113 aa).

Over 1–3 the chain is Cytoplasmic; it reads MRL. A helical membrane pass occupies residues 4 to 21; sequence ISLLLFVLLLAIQYPLWL. At 22–113 the chain is on the periplasmic side; that stretch reads GKGGWLRVWE…PNSPAATGRH (92 aa). Residues 34-63 are a coiled coil; it reads HQVQEQATRNQMLKLRNAKLEGEVKDLQDG. The disordered stretch occupies residues 93 to 113; sequence KVSATPPLPPPPNSPAATGRH.

This sequence belongs to the FtsB family. In terms of assembly, part of a complex composed of FtsB, FtsL and FtsQ.

Its subcellular location is the cell inner membrane. Functionally, essential cell division protein. May link together the upstream cell division proteins, which are predominantly cytoplasmic, with the downstream cell division proteins, which are predominantly periplasmic. The sequence is that of Cell division protein FtsB from Cupriavidus pinatubonensis (strain JMP 134 / LMG 1197) (Cupriavidus necator (strain JMP 134)).